A 369-amino-acid polypeptide reads, in one-letter code: Anhydro-N-acetylmuramic acid kinase (369 aa).

12–19 (GTSLDGVD) serves as a coordination point for ATP.

This sequence belongs to the anhydro-N-acetylmuramic acid kinase family.

The catalysed reaction is 1,6-anhydro-N-acetyl-beta-muramate + ATP + H2O = N-acetyl-D-muramate 6-phosphate + ADP + H(+). It participates in amino-sugar metabolism; 1,6-anhydro-N-acetylmuramate degradation. The protein operates within cell wall biogenesis; peptidoglycan recycling. Catalyzes the specific phosphorylation of 1,6-anhydro-N-acetylmuramic acid (anhMurNAc) with the simultaneous cleavage of the 1,6-anhydro ring, generating MurNAc-6-P. Is required for the utilization of anhMurNAc either imported from the medium or derived from its own cell wall murein, and thus plays a role in cell wall recycling. The sequence is that of Anhydro-N-acetylmuramic acid kinase from Escherichia coli O1:K1 / APEC.